We begin with the raw amino-acid sequence, 659 residues long: L-type lectin-domain containing receptor kinase V.7 (659 aa).

Residues methionine 1–glycine 25 form the signal peptide. The segment at asparagine 22–serine 244 is legume-lectin like. Over asparagine 26–arginine 275 the chain is Extracellular. 4 N-linked (GlcNAc...) asparagine glycosylation sites follow: asparagine 45, asparagine 64, asparagine 110, and asparagine 192. The chain crosses the membrane as a helical span at residues isoleucine 276–phenylalanine 296. The Cytoplasmic portion of the chain corresponds to valine 297 to arginine 659. Residues phenylalanine 333–leucine 595 form the Protein kinase domain. ATP is bound by residues leucine 339–valine 347 and lysine 362. Catalysis depends on aspartate 462, which acts as the Proton acceptor.

The protein in the C-terminal section; belongs to the protein kinase superfamily. Ser/Thr protein kinase family. This sequence in the N-terminal section; belongs to the leguminous lectin family.

Its subcellular location is the cell membrane. The catalysed reaction is L-seryl-[protein] + ATP = O-phospho-L-seryl-[protein] + ADP + H(+). It catalyses the reaction L-threonyl-[protein] + ATP = O-phospho-L-threonyl-[protein] + ADP + H(+). Its function is as follows. Involved in resistance response to the pathogenic oomycetes Phytophthora infestans and Phytophthora capsici and to the pathogenic bacteria Pseudomonas syringae. This chain is L-type lectin-domain containing receptor kinase V.7, found in Arabidopsis thaliana (Mouse-ear cress).